The primary structure comprises 743 residues: Phosphoribosylformylglycinamidine synthase subunit PurL (743 aa).

Histidine 50 is a catalytic residue. Residues tyrosine 53 and lysine 92 each contribute to the ATP site. Glutamate 94 is a binding site for Mg(2+). Substrate-binding positions include 95–98 (SHNH) and arginine 117. Histidine 96 (proton acceptor) is an active-site residue. Residue aspartate 118 coordinates Mg(2+). A substrate-binding site is contributed by glutamine 241. A Mg(2+)-binding site is contributed by aspartate 269. 313–315 (ESQ) lines the substrate pocket. Residues aspartate 494 and glycine 531 each coordinate ATP. Asparagine 532 serves as a coordination point for Mg(2+). Serine 534 serves as a coordination point for substrate.

The protein belongs to the FGAMS family. Monomer. Part of the FGAM synthase complex composed of 1 PurL, 1 PurQ and 2 PurS subunits.

The protein resides in the cytoplasm. It catalyses the reaction N(2)-formyl-N(1)-(5-phospho-beta-D-ribosyl)glycinamide + L-glutamine + ATP + H2O = 2-formamido-N(1)-(5-O-phospho-beta-D-ribosyl)acetamidine + L-glutamate + ADP + phosphate + H(+). The protein operates within purine metabolism; IMP biosynthesis via de novo pathway; 5-amino-1-(5-phospho-D-ribosyl)imidazole from N(2)-formyl-N(1)-(5-phospho-D-ribosyl)glycinamide: step 1/2. In terms of biological role, part of the phosphoribosylformylglycinamidine synthase complex involved in the purines biosynthetic pathway. Catalyzes the ATP-dependent conversion of formylglycinamide ribonucleotide (FGAR) and glutamine to yield formylglycinamidine ribonucleotide (FGAM) and glutamate. The FGAM synthase complex is composed of three subunits. PurQ produces an ammonia molecule by converting glutamine to glutamate. PurL transfers the ammonia molecule to FGAR to form FGAM in an ATP-dependent manner. PurS interacts with PurQ and PurL and is thought to assist in the transfer of the ammonia molecule from PurQ to PurL. The polypeptide is Phosphoribosylformylglycinamidine synthase subunit PurL (Sinorhizobium medicae (strain WSM419) (Ensifer medicae)).